We begin with the raw amino-acid sequence, 317 residues long: Carbonic anhydrase 6 (317 aa).

A signal peptide spans 1-17; the sequence is MRALVSVVSLFFLGIQA. An Alpha-carbonic anhydrase domain is found at 19–277; the sequence is SDWSYSGDDG…NNHRVVEANF (259 aa). C41 and C223 are joined by a disulfide. The active-site Proton donor/acceptor is H84. 3 residues coordinate Zn(2+): H110, H112, and H137. 219-220 serves as a coordination point for substrate; sequence TT. Residue N255 is glycosylated (N-linked (GlcNAc...) asparagine).

The protein belongs to the alpha-carbonic anhydrase family. Zn(2+) is required as a cofactor. Major constituent of saliva.

Its subcellular location is the secreted. It carries out the reaction hydrogencarbonate + H(+) = CO2 + H2O. Functionally, reversible hydration of carbon dioxide. Its role in saliva is unknown. The protein is Carbonic anhydrase 6 (Ca6) of Mus musculus (Mouse).